The following is a 288-amino-acid chain: Purine nucleoside phosphorylase (288 aa).

Position 65-66 (65-66 (RN)) interacts with phosphate. M201 is a binding site for substrate. Phosphate is bound at residue T202.

It belongs to the PNP/MTAP phosphorylase family. MTAP subfamily. In terms of assembly, homotrimer.

It localises to the cytoplasm. The protein resides in the nucleus. The catalysed reaction is a purine D-ribonucleoside + phosphate = a purine nucleobase + alpha-D-ribose 1-phosphate. It functions in the pathway purine metabolism; purine nucleoside salvage. In terms of biological role, purine nucleoside phosphorylase involved in purine salvage. The polypeptide is Purine nucleoside phosphorylase (Drosophila pseudoobscura pseudoobscura (Fruit fly)).